The chain runs to 301 residues: Phosphatidylserine decarboxylase proenzyme (301 aa).

Active-site charge relay system; for autoendoproteolytic cleavage activity residues include Asp117, His173, and Ser260. Ser260 functions as the Schiff-base intermediate with substrate; via pyruvic acid; for decarboxylase activity in the catalytic mechanism. Residue Ser260 is modified to Pyruvic acid (Ser); by autocatalysis.

The protein belongs to the phosphatidylserine decarboxylase family. PSD-B subfamily. Prokaryotic type II sub-subfamily. Heterodimer of a large membrane-associated beta subunit and a small pyruvoyl-containing alpha subunit. The cofactor is pyruvate. In terms of processing, is synthesized initially as an inactive proenzyme. Formation of the active enzyme involves a self-maturation process in which the active site pyruvoyl group is generated from an internal serine residue via an autocatalytic post-translational modification. Two non-identical subunits are generated from the proenzyme in this reaction, and the pyruvate is formed at the N-terminus of the alpha chain, which is derived from the carboxyl end of the proenzyme. The autoendoproteolytic cleavage occurs by a canonical serine protease mechanism, in which the side chain hydroxyl group of the serine supplies its oxygen atom to form the C-terminus of the beta chain, while the remainder of the serine residue undergoes an oxidative deamination to produce ammonia and the pyruvoyl prosthetic group on the alpha chain. During this reaction, the Ser that is part of the protease active site of the proenzyme becomes the pyruvoyl prosthetic group, which constitutes an essential element of the active site of the mature decarboxylase.

The protein resides in the cell membrane. It carries out the reaction a 1,2-diacyl-sn-glycero-3-phospho-L-serine + H(+) = a 1,2-diacyl-sn-glycero-3-phosphoethanolamine + CO2. Its pathway is phospholipid metabolism; phosphatidylethanolamine biosynthesis; phosphatidylethanolamine from CDP-diacylglycerol: step 2/2. Its function is as follows. Catalyzes the formation of phosphatidylethanolamine (PtdEtn) from phosphatidylserine (PtdSer). This Chlamydia trachomatis serovar L2 (strain ATCC VR-902B / DSM 19102 / 434/Bu) protein is Phosphatidylserine decarboxylase proenzyme.